Here is a 480-residue protein sequence, read N- to C-terminus: Prostacyclin synthase (480 aa).

The chain crosses the membrane as a helical span at residues 1–21 (MMWTALLLVGLSILVIVLYGR). Substrate is bound by residues Arg-104, Leu-110, Asn-277, 338–339 (TR), and Arg-362. A heme-binding site is contributed by Cys-421.

This sequence belongs to the cytochrome P450 family. The cofactor is heme.

It localises to the endoplasmic reticulum membrane. It catalyses the reaction prostaglandin H2 = prostaglandin I2. The enzyme catalyses a hydroperoxyeicosatetraenoate = an oxoeicosatetraenoate + H2O. It carries out the reaction (15S)-hydroperoxy-(5Z,8Z,11Z,13E)-eicosatetraenoate = 15-oxo-(5Z,8Z,11Z,13E)-eicosatetraenoate + H2O. The catalysed reaction is (15S)-hydroperoxy-(5Z,8Z,11Z,13E)-eicosatetraenoate + AH2 = (15S)-hydroxy-(5Z,8Z,11Z,13E)-eicosatetraenoate + A + H2O. Catalyzes the isomerization of prostaglandin H2 to prostacyclin (= prostaglandin I2). Functionally, catalyzes the biosynthesis and metabolism of eicosanoids. Catalyzes the isomerization of prostaglandin H2 to prostacyclin (= prostaglandin I2), a potent mediator of vasodilation and inhibitor of platelet aggregation. Additionally, displays dehydratase activity, toward hydroperoxyeicosatetraenoates (HPETEs), especially toward (15S)-hydroperoxy-(5Z,8Z,11Z,13E)-eicosatetraenoate (15(S)-HPETE). The protein is Prostacyclin synthase of Danio rerio (Zebrafish).